The primary structure comprises 622 residues: Iron transport multicopper oxidase fetC (622 aa).

The N-terminal stretch at 1–20 (MARLVHLTAVLAASIRLAAA) is a signal peptide. Topologically, residues 21–552 (ATINHDFNVT…DPLPAGFTTR (532 aa)) are extracellular. N-linked (GlcNAc...) asparagine glycans are attached at residues asparagine 28 and asparagine 74. 2 consecutive Plastocyanin-like domains span residues 29 to 144 (VTWV…VHDP) and 154 to 301 (EEIV…SYDK). The Cu cation site is built by histidine 80 and histidine 82. Residues asparagine 87 and asparagine 112 are each glycosylated (N-linked (GlcNAc...) asparagine). Positions 124 and 126 each coordinate Cu cation. Asparagine 194, asparagine 198, asparagine 265, asparagine 292, and asparagine 358 each carry an N-linked (GlcNAc...) asparagine glycan. The Plastocyanin-like 3 domain occupies 362-497 (KSPKVPTLYS…GLVATFVEAP (136 aa)). Cu cation-binding residues include histidine 412, histidine 415, and histidine 417. Residue asparagine 428 is glycosylated (N-linked (GlcNAc...) asparagine). Positions 478, 479, 480, and 484 each coordinate Cu cation. A helical transmembrane segment spans residues 553-573 (GIVALVFSCVTGILGICVVAW). Residues 574-622 (YGMSQPLEEATAAVATLVREAQVTGSGTSPNHDDGNAAATEAGVLRRRT) lie on the Cytoplasmic side of the membrane. The tract at residues 597–622 (TGSGTSPNHDDGNAAATEAGVLRRRT) is disordered.

Belongs to the multicopper oxidase family.

The protein resides in the cell membrane. Cell surface ferroxidase; part of the reductive iron assimilatory system (RIA), a siderophore-independent high affinity iron uptake mechanism. Required to oxidize Fe(2+) and release it from the transporter. The polypeptide is Iron transport multicopper oxidase fetC (Epichloe festucae (strain E2368)).